Reading from the N-terminus, the 499-residue chain is Probable cytosol aminopeptidase (499 aa).

Mn(2+)-binding residues include K262 and D267. Residue K274 is part of the active site. D285, D344, and E346 together coordinate Mn(2+). Residue R348 is part of the active site.

It belongs to the peptidase M17 family. The cofactor is Mn(2+).

It is found in the cytoplasm. It carries out the reaction Release of an N-terminal amino acid, Xaa-|-Yaa-, in which Xaa is preferably Leu, but may be other amino acids including Pro although not Arg or Lys, and Yaa may be Pro. Amino acid amides and methyl esters are also readily hydrolyzed, but rates on arylamides are exceedingly low.. The catalysed reaction is Release of an N-terminal amino acid, preferentially leucine, but not glutamic or aspartic acids.. Its function is as follows. Presumably involved in the processing and regular turnover of intracellular proteins. Catalyzes the removal of unsubstituted N-terminal amino acids from various peptides. The chain is Probable cytosol aminopeptidase from Protochlamydia amoebophila (strain UWE25).